Here is a 1144-residue protein sequence, read N- to C-terminus: Probable translation initiation factor IF-2 (1144 aa).

One can recognise a DOD-type homing endonuclease domain in the interval Phe-232–Ile-362. One can recognise a tr-type G domain in the interval Thr-551 to Leu-768. GTP-binding positions include Asp-624–His-628 and Asn-678–Asp-681.

Belongs to the TRAFAC class translation factor GTPase superfamily. Classic translation factor GTPase family. IF-2 subfamily. This protein undergoes a protein self splicing that involves a post-translational excision of the intervening region (intein) followed by peptide ligation.

Function in general translation initiation by promoting the binding of the formylmethionine-tRNA to ribosomes. Seems to function along with eIF-2. This Thermococcus kodakarensis (strain ATCC BAA-918 / JCM 12380 / KOD1) (Pyrococcus kodakaraensis (strain KOD1)) protein is Probable translation initiation factor IF-2 (infB).